Here is a 126-residue protein sequence, read N- to C-terminus: Putative phosphotransferase enzyme IIB component UU178 (126 aa).

Residues 11-31 traverse the membrane as a helical segment; the sequence is LIIFLGIITFGIFIIYFFTKA. Residues 49-126 form the PTS EIIB type-1 domain; the sequence is PFSLNDFYNC…KELIKKDLFS (78 aa).

It to M.genitalium MG129 and M.pneumoniae MPN268.

Its subcellular location is the membrane. In terms of biological role, the phosphoenolpyruvate-dependent sugar phosphotransferase system (PTS), a major carbohydrate active -transport system, catalyzes the phosphorylation of incoming sugar substrates concomitant with their translocation across the cell membrane. The chain is Putative phosphotransferase enzyme IIB component UU178 from Ureaplasma parvum serovar 3 (strain ATCC 700970).